The chain runs to 1575 residues: Laminin subunit gamma-3 (1575 aa).

The signal sequence occupies residues 1 to 19 (MAAAALLLGLALLAPRAAG). Residues 31–270 (RPQRCLPVFE…AVSDFSVGGR (240 aa)) form the Laminin N-terminal domain. 2 N-linked (GlcNAc...) asparagine glycosylation sites follow: Asn-87 and Asn-119. Intrachain disulfides connect Cys-271–Cys-280, Cys-273–Cys-290, Cys-292–Cys-301, Cys-304–Cys-324, Cys-327–Cys-336, Cys-329–Cys-352, Cys-355–Cys-364, Cys-367–Cys-380, Cys-383–Cys-395, Cys-385–Cys-401, Cys-403–Cys-412, Cys-415–Cys-427, Cys-430–Cys-441, Cys-432–Cys-448, Cys-450–Cys-459, and Cys-462–Cys-477. Laminin EGF-like domains lie at 271 to 326 (CKCN…ECLP), 327 to 382 (CNCS…PCQP), 383 to 429 (CDCQ…GCRP), and 430 to 479 (CTCN…GCSS). Residue Asn-295 is glycosylated (N-linked (GlcNAc...) asparagine). The N-linked (GlcNAc...) asparagine glycan is linked to Asn-328. The 10-residue stretch at 480-489 (CFCYGHSKVC) folds into the Laminin EGF-like 5; first part domain. The Laminin IV type A domain maps to 499–672 (HILSDFHQGA…LSPPASWVEI (174 aa)). A glycan (N-linked (GlcNAc...) asparagine) is linked at Asn-631. One can recognise a Laminin EGF-like 5; second part domain in the interval 673–706 (CSCPTGYTGQFCESCAPGYKREMPQGGPYASCVP). Cystine bridges form between Cys-707-Cys-715, Cys-709-Cys-722, Cys-724-Cys-733, Cys-736-Cys-752, Cys-755-Cys-763, Cys-757-Cys-774, Cys-777-Cys-786, Cys-789-Cys-807, Cys-810-Cys-824, Cys-812-Cys-831, Cys-834-Cys-843, Cys-846-Cys-863, Cys-866-Cys-880, Cys-868-Cys-887, Cys-889-Cys-898, Cys-901-Cys-914, Cys-917-Cys-929, Cys-919-Cys-936, Cys-938-Cys-947, Cys-950-Cys-962, Cys-965-Cys-977, Cys-967-Cys-983, Cys-985-Cys-994, and Cys-997-Cys-1010. Laminin EGF-like domains lie at 707-754 (CTCN…DCQP), 755-809 (CPCP…PCHQ), 810-865 (CQCS…KCMP), 866-916 (CSCH…GCRS), 917-964 (CKCH…GCRA), and 965-1013 (CRCS…CQQC). Asn-837 is a glycosylation site (N-linked (GlcNAc...) asparagine). An N-linked (GlcNAc...) asparagine glycan is attached at Asn-980. The domain II and I stretch occupies residues 1014–1575 (PSCYALVKEE…SLPENCASWQ (562 aa)). The Cell attachment site motif lies at 1059–1061 (RGD). Positions 1073 to 1134 (REAFLEQMMS…SEEEILHAAA (62 aa)) form a coiled coil. Asn-1185 carries an N-linked (GlcNAc...) asparagine glycan. A coiled-coil region spans residues 1201-1228 (LETQRDLEDRYQEVQAAQKALRTAVAEV). A disordered region spans residues 1378-1399 (KQAERMLGNAAPLSSSAKKKGR). Coiled coils occupy residues 1410–1492 (KLAK…LARL) and 1523–1567 (GSLQ…LHSL).

Laminin is a complex glycoprotein, consisting of three different polypeptide chains (alpha, beta, gamma), which are bound to each other by disulfide bonds into a cross-shaped molecule comprising one long and three short arms with globules at each end. Gamma-3 is a subunit of laminin-12 (laminin-213), laminin-14 (laminin-423) and laminin-15 (laminin-523). In terms of tissue distribution, broadly expressed in: skin, heart, lung, and the reproductive tracts.

The protein resides in the secreted. It localises to the extracellular space. Its subcellular location is the extracellular matrix. It is found in the basement membrane. Its function is as follows. Binding to cells via a high affinity receptor, laminin is thought to mediate the attachment, migration and organization of cells into tissues during embryonic development by interacting with other extracellular matrix components. The protein is Laminin subunit gamma-3 (LAMC3) of Homo sapiens (Human).